The chain runs to 163 residues: Nucleotide-binding protein HS_0688 (163 aa).

It belongs to the YajQ family.

Functionally, nucleotide-binding protein. In Histophilus somni (strain 129Pt) (Haemophilus somnus), this protein is Nucleotide-binding protein HS_0688.